The following is a 371-amino-acid chain: N-methyl-L-tryptophan oxidase (371 aa).

4–34 (DLIVIGSGSVGSAAGYYASQAGLNVLMIDSA) serves as a coordination point for FAD. C307 bears the S-8alpha-FAD cysteine mark.

This sequence belongs to the MSOX/MTOX family. MTOX subfamily. Monomer. It depends on FAD as a cofactor.

It carries out the reaction N(alpha)-methyl-L-tryptophan + O2 + H2O = L-tryptophan + formaldehyde + H2O2. In terms of biological role, catalyzes the oxidative demethylation of N-methyl-L-tryptophan. This is N-methyl-L-tryptophan oxidase from Yersinia pseudotuberculosis serotype O:1b (strain IP 31758).